The sequence spans 340 residues: Small ribosomal subunit biogenesis GTPase RsgA (340 aa).

The span at 20–34 (ERAERAERRARRDDT) shows a compositional bias: basic and acidic residues. A disordered region spans residues 20–42 (ERAERAERRARRDDTSLDAGDYG). The region spanning 116–274 (RGQLKPVAAN…LIDSPGIREF (159 aa)) is the CP-type G domain. GTP contacts are provided by residues 163–166 (NKTD) and 216–224 (GQSGVGKSS). The Zn(2+) site is built by Cys298, Cys303, His305, and Cys311.

Belongs to the TRAFAC class YlqF/YawG GTPase family. RsgA subfamily. Monomer. Associates with 30S ribosomal subunit, binds 16S rRNA. Requires Zn(2+) as cofactor.

It localises to the cytoplasm. Functionally, one of several proteins that assist in the late maturation steps of the functional core of the 30S ribosomal subunit. Helps release RbfA from mature subunits. May play a role in the assembly of ribosomal proteins into the subunit. Circularly permuted GTPase that catalyzes slow GTP hydrolysis, GTPase activity is stimulated by the 30S ribosomal subunit. The protein is Small ribosomal subunit biogenesis GTPase RsgA of Chromohalobacter salexigens (strain ATCC BAA-138 / DSM 3043 / CIP 106854 / NCIMB 13768 / 1H11).